Consider the following 32-residue polypeptide: uncharacterized protein (32 aa).

This is an uncharacterized protein from Enterobacteria phage T4 (Bacteriophage T4).